The following is a 156-amino-acid chain: Small ribosomal subunit protein uS7 (156 aa).

This sequence belongs to the universal ribosomal protein uS7 family. In terms of assembly, part of the 30S ribosomal subunit. Contacts proteins S9 and S11.

In terms of biological role, one of the primary rRNA binding proteins, it binds directly to 16S rRNA where it nucleates assembly of the head domain of the 30S subunit. Is located at the subunit interface close to the decoding center, probably blocks exit of the E-site tRNA. The chain is Small ribosomal subunit protein uS7 from Mycobacterium ulcerans (strain Agy99).